Consider the following 494-residue polypeptide: Probable malate:quinone oxidoreductase 3 (494 aa).

Belongs to the MQO family. FAD is required as a cofactor.

It catalyses the reaction (S)-malate + a quinone = a quinol + oxaloacetate. Its pathway is carbohydrate metabolism; tricarboxylic acid cycle; oxaloacetate from (S)-malate (quinone route): step 1/1. The polypeptide is Probable malate:quinone oxidoreductase 3 (Staphylococcus epidermidis (strain ATCC 35984 / DSM 28319 / BCRC 17069 / CCUG 31568 / BM 3577 / RP62A)).